The chain runs to 356 residues: tRNA N6-adenosine threonylcarbamoyltransferase (356 aa).

2 residues coordinate Fe cation: His-115 and His-119. Substrate contacts are provided by residues 138–142, Asp-171, Gly-184, and Asn-283; that span reads LVSGG. Asp-311 contributes to the Fe cation binding site.

Belongs to the KAE1 / TsaD family. Fe(2+) serves as cofactor.

The protein localises to the cytoplasm. It catalyses the reaction L-threonylcarbamoyladenylate + adenosine(37) in tRNA = N(6)-L-threonylcarbamoyladenosine(37) in tRNA + AMP + H(+). In terms of biological role, required for the formation of a threonylcarbamoyl group on adenosine at position 37 (t(6)A37) in tRNAs that read codons beginning with adenine. Is involved in the transfer of the threonylcarbamoyl moiety of threonylcarbamoyl-AMP (TC-AMP) to the N6 group of A37, together with TsaE and TsaB. TsaD likely plays a direct catalytic role in this reaction. The polypeptide is tRNA N6-adenosine threonylcarbamoyltransferase (Prochlorococcus marinus (strain NATL1A)).